A 477-amino-acid polypeptide reads, in one-letter code: MREIEFTFKGLLIRLSLALSDLIFFNIALALAIVLINGFPGEILTGIPQHELDLKIATHILLSVICVGWFWVRLRHYTYRKPFWFELKEVFRTILIFSIVDLSVSALSKWELSRWIWILTWLLSMAMVPFGRACVKRLLNRKKLWKKQSIIIGSGKNAQEAWQALQSEEMMGFDVIAFYDVDGSQTALELFGVPVLKEEQQLWSLVDSDTQFIVAVEYEQSQSRDRWLKNLATHNCRSVSVIPSLRGVPLYGTDMAYIFSHEVMILRVSNNLAKHSSRFLKRTFDLVGALSIITLLLPALVILIFMVSRDGGAPIYGHERVGRDGRKFKCLKFRSMVVNSKEVLEEVLRTDPVARAEWDEDFKLKNDPRITRIGHFIRKTSLDELPQLWNVVRGEMSLVGPRPVIEAELERYAGDVDYYFMAKPGMTGLWQVSGRNDVSYETRVYFDSWYVKNWSLWNDIAILFKTIGVVLKRDGAY.

Helical transmembrane passes span 16–36 (SLAL…IVLI), 52–72 (LDLK…WFWV), 93–113 (TILI…WELS), 115–135 (WIWI…RACV), 175–195 (VIAF…GVPV), and 284–304 (FDLV…VILI). Residues 305–477 (FMVSRDGGAP…GVVLKRDGAY (173 aa)) are Cytoplasmic-facing.

Belongs to the bacterial sugar transferase family.

Its subcellular location is the cell membrane. The protein operates within glycan metabolism; exopolysaccharide biosynthesis. Involved in the biosynthesis of amylovoran which functions as a virulence factor. May act as a sugar transferase and may be involved in the export of the repeating unit by flipping the lipid carrier to the periplasmic face of the inner membrane. In Erwinia amylovora (Fire blight bacteria), this protein is UDP-galactose-lipid carrier transferase (amsG).